The following is a 103-amino-acid chain: Small ribosomal subunit protein uS10 (103 aa).

Residues 35 to 59 (LSGPVPLPTKTLEVPSRKSPDGEGT) are disordered.

This sequence belongs to the universal ribosomal protein uS10 family. As to quaternary structure, part of the 30S ribosomal subunit.

In terms of biological role, involved in the binding of tRNA to the ribosomes. This Haloarcula marismortui (strain ATCC 43049 / DSM 3752 / JCM 8966 / VKM B-1809) (Halobacterium marismortui) protein is Small ribosomal subunit protein uS10 (rps10).